Reading from the N-terminus, the 253-residue chain is CTP:phosphoglutamine cytidylyltransferase (253 aa).

The catalysed reaction is N(5)-phospho-L-glutamine + CTP + H(+) = N(5)-(cytidine 5'-diphosphoramidyl)-L-glutamine + diphosphate. The protein operates within capsule biogenesis; capsule polysaccharide biosynthesis. In terms of biological role, involved in the biosynthesis of the O-methyl phosphoramidate (MeOPN) group found on the capsular polysaccharide (CPS) of C.jejuni. Catalyzes the formation of CDP-L-glutamine from CTP and L-glutamine phosphate. In the presence of MnCTP, catalyzes the displacement of pyrophosphate from CTP using phosphoramidate, methyl phosphate, methyl phosphonate, phosphate, arsenate, ethanolamine phosphate, (R/S)-glycerol-1-phosphate, glycerol-2-phosphate, serinol phosphate, L-serine phosphate and 3-phospho-D-glycerate as substrate in addition to L-glutamine phosphate. This Campylobacter jejuni subsp. jejuni serotype O:2 (strain ATCC 700819 / NCTC 11168) protein is CTP:phosphoglutamine cytidylyltransferase.